The chain runs to 207 residues: MREAIIKRAAKELKEGMYVNLGIGLPTLVANEVSGMNIVFQSENGLLGIGAYPLEGSVDADLINAGKETITVVPGASFFNSADSFAMIRGGHIDLAILGGMEVSQNGDLANWMIPKKLIKGMGGAMDLVHGAKKVIVIMEHCNKYGESKVKKECSLPLTGKGVVHQLITDLAVFEFSNNAMKLVELQEGVSLDQVKEKTEAEFEVRL.

Residue glutamate 43 is part of the active site.

It belongs to the 3-oxoacid CoA-transferase subunit B family. Heterodimer of a subunit A and a subunit B.

The catalysed reaction is a 3-oxo acid + succinyl-CoA = a 3-oxoacyl-CoA + succinate. In Helicobacter pylori (strain ATCC 700392 / 26695) (Campylobacter pylori), this protein is Succinyl-CoA:3-ketoacid coenzyme A transferase subunit B (scoB).